We begin with the raw amino-acid sequence, 504 residues long: UDP-N-acetylmuramoylalanine--D-glutamate ligase (504 aa).

Residue 132-138 participates in ATP binding; that stretch reads GTNGKTT. The segment at 284–310 is disordered; that stretch reads AQDRDATDEPAPTRRRKSESTAPPDIG.

It belongs to the MurCDEF family.

It localises to the cytoplasm. The catalysed reaction is UDP-N-acetyl-alpha-D-muramoyl-L-alanine + D-glutamate + ATP = UDP-N-acetyl-alpha-D-muramoyl-L-alanyl-D-glutamate + ADP + phosphate + H(+). The protein operates within cell wall biogenesis; peptidoglycan biosynthesis. Its function is as follows. Cell wall formation. Catalyzes the addition of glutamate to the nucleotide precursor UDP-N-acetylmuramoyl-L-alanine (UMA). The chain is UDP-N-acetylmuramoylalanine--D-glutamate ligase from Paraburkholderia phymatum (strain DSM 17167 / CIP 108236 / LMG 21445 / STM815) (Burkholderia phymatum).